The following is a 406-amino-acid chain: Zinc metalloprotease Rip1 (406 aa).

A helical membrane pass occupies residues 1-21; sequence MMFGIGIVLFALAILVSVALH. Residue His-21 participates in Zn(2+) binding. Glu-22 is a catalytic residue. Residue His-25 participates in Zn(2+) binding. Residues 108-128 form a helical membrane-spanning segment; that stretch reads PAMNFVIGLVLIYGIAIVWGL. In terms of domain architecture, PDZ spans 125 to 209; that stretch reads VWGLPNLHQP…RIEFKRDGRV (85 aa). Asp-206 provides a ligand contact to Zn(2+). The next 2 membrane-spanning stretches (helical) occupy residues 327-349 and 375-395; these read NFVL…IAVA and LMPA…LTVT.

It belongs to the peptidase M50B family. Zn(2+) is required as a cofactor.

The protein resides in the cell membrane. With respect to regulation, proteolysis is inhibited by Wag31; when Wag31 is non-functional oxidative stress increases proteolysis. In terms of biological role, a probable intramembrane site-2 protease (S2P) that cleaves type-2 transmembrane proteins within their membrane-spanning domains. Degrades PbpB (PBP3, FtsI) under conditions of oxidatives stress; degradation is inhibited by Wag31-PbpB interaction. Also cleaves anti-sigma factors RskA, RslA and RslM. Site-1 proteases have not yet been identified in this organism. Regulated intramembrane proteolysis (RIP) occurs when an extracytoplasmic signal (possibly oxidative stress) triggers a concerted proteolytic cascade to transmit information and elicit cellular responses. The membrane-spanning regulatory substrate protein (includes anti-sigma factors RskA, RslA, RsmA, and PbpB) is first cut extracytoplasmically (site-1 protease, S1P), then within the membrane itself (site-2 protease, S2P, this entry), while cytoplasmic proteases finish degrading the regulatory protein, liberating the effector protein (ECF sigma factors SigK, SigL and SigM). In Mycolicibacterium smegmatis (strain ATCC 700084 / mc(2)155) (Mycobacterium smegmatis), this protein is Zinc metalloprotease Rip1 (rip1).